The primary structure comprises 185 residues: Biogenesis of lysosome-related organelles complex 1 subunit 5 (185 aa).

A compositionally biased stretch (polar residues) spans 1-16 (MSSSNSPVKSTGSPFI). The interval 1–24 (MSSSNSPVKSTGSPFIQSLKPRDN) is disordered. Residues 98–182 (MQDQLASVLK…VTMEKELSKQ (85 aa)) are a coiled coil.

This sequence belongs to the BLOC1S5 family. In terms of assembly, component of the biogenesis of lysosome-related organelles complex 1 (BLOC-1).

Component of the BLOC-1 complex, a complex that is required for normal biogenesis of lysosome-related organelles (LRO), such as platelet dense granules and melanosomes. Plays a role in intracellular vesicle trafficking. This is Biogenesis of lysosome-related organelles complex 1 subunit 5 (bloc1s5) from Xenopus tropicalis (Western clawed frog).